A 346-amino-acid polypeptide reads, in one-letter code: Holliday junction branch migration complex subunit RuvB (346 aa).

A large ATPase domain (RuvB-L) region spans residues 2 to 183 (TDDRIIGAGA…FGIVQRLEFY (182 aa)). Residues isoleucine 22, arginine 23, glycine 64, lysine 67, threonine 68, threonine 69, 130–132 (EDF), arginine 173, tyrosine 183, and arginine 220 contribute to the ATP site. Threonine 68 lines the Mg(2+) pocket. A small ATPAse domain (RuvB-S) region spans residues 184–254 (SVEELTRIVR…VAQAAMKMLK (71 aa)). The tract at residues 257–346 (PEGFDELDRR…DLFAEVPDVG (90 aa)) is head domain (RuvB-H). Positions 293, 312, and 317 each coordinate DNA.

The protein belongs to the RuvB family. In terms of assembly, homohexamer. Forms an RuvA(8)-RuvB(12)-Holliday junction (HJ) complex. HJ DNA is sandwiched between 2 RuvA tetramers; dsDNA enters through RuvA and exits via RuvB. An RuvB hexamer assembles on each DNA strand where it exits the tetramer. Each RuvB hexamer is contacted by two RuvA subunits (via domain III) on 2 adjacent RuvB subunits; this complex drives branch migration. In the full resolvosome a probable DNA-RuvA(4)-RuvB(12)-RuvC(2) complex forms which resolves the HJ.

It localises to the cytoplasm. It carries out the reaction ATP + H2O = ADP + phosphate + H(+). Its function is as follows. The RuvA-RuvB-RuvC complex processes Holliday junction (HJ) DNA during genetic recombination and DNA repair, while the RuvA-RuvB complex plays an important role in the rescue of blocked DNA replication forks via replication fork reversal (RFR). RuvA specifically binds to HJ cruciform DNA, conferring on it an open structure. The RuvB hexamer acts as an ATP-dependent pump, pulling dsDNA into and through the RuvAB complex. RuvB forms 2 homohexamers on either side of HJ DNA bound by 1 or 2 RuvA tetramers; 4 subunits per hexamer contact DNA at a time. Coordinated motions by a converter formed by DNA-disengaged RuvB subunits stimulates ATP hydrolysis and nucleotide exchange. Immobilization of the converter enables RuvB to convert the ATP-contained energy into a lever motion, pulling 2 nucleotides of DNA out of the RuvA tetramer per ATP hydrolyzed, thus driving DNA branch migration. The RuvB motors rotate together with the DNA substrate, which together with the progressing nucleotide cycle form the mechanistic basis for DNA recombination by continuous HJ branch migration. Branch migration allows RuvC to scan DNA until it finds its consensus sequence, where it cleaves and resolves cruciform DNA. This Stenotrophomonas maltophilia (strain R551-3) protein is Holliday junction branch migration complex subunit RuvB.